Here is a 308-residue protein sequence, read N- to C-terminus: Acetyl-coenzyme A carboxylase carboxyl transferase subunit beta 1 (308 aa).

The 270-residue stretch at 25-294 folds into the CoA carboxyltransferase N-terminal domain; sequence VWTKCTSCEQ…PLVVSVNESP (270 aa). Residues cysteine 29, cysteine 32, cysteine 48, and cysteine 51 each coordinate Zn(2+). A C4-type zinc finger spans residues 29-51; sequence CTSCEQVLYHAELERNLEVCPKC. The tract at residues 288 to 308 is disordered; that stretch reads VSVNESPNEEPYSVPEVDEKG.

It belongs to the AccD/PCCB family. Acetyl-CoA carboxylase is a heterohexamer composed of biotin carboxyl carrier protein (AccB), biotin carboxylase (AccC) and two subunits each of ACCase subunit alpha (AccA) and ACCase subunit beta (AccD). The cofactor is Zn(2+).

The protein resides in the cytoplasm. It carries out the reaction N(6)-carboxybiotinyl-L-lysyl-[protein] + acetyl-CoA = N(6)-biotinyl-L-lysyl-[protein] + malonyl-CoA. Its pathway is lipid metabolism; malonyl-CoA biosynthesis; malonyl-CoA from acetyl-CoA: step 1/1. Component of the acetyl coenzyme A carboxylase (ACC) complex. Biotin carboxylase (BC) catalyzes the carboxylation of biotin on its carrier protein (BCCP) and then the CO(2) group is transferred by the transcarboxylase to acetyl-CoA to form malonyl-CoA. This Vibrio parahaemolyticus serotype O3:K6 (strain RIMD 2210633) protein is Acetyl-coenzyme A carboxylase carboxyl transferase subunit beta 1.